We begin with the raw amino-acid sequence, 342 residues long: Gibberellin cluster GA4 desaturase (342 aa).

Residues 127-183 form a disordered region; the sequence is PELAPPYPMPGKSSSGSKEREAIPANELPTTRAKGFQKGEEEGPVRKPHKDWGPSGA.

It belongs to the asaB hydroxylase/desaturase family.

It participates in plant hormone biosynthesis; gibberellin biosynthesis. In terms of biological role, GA4 desaturase; part of the gene cluster that mediates the biosynthesis of gibberellins (GAs), diterpenoids that may provide a selective advantage during infection of the preferred host plant, rice. Gibberellins (GAs) are diterpenoids and are synthesized via the mevalonate pathway. Biosynthesis of the major metabolite GA3 (gibberellic acid) from geranylgeranyl diphosphate (GGPP) requires 13 steps. The GGPP produced by the geranylgeranyl diphosphate synthase GGS2 is converted to ent-kaurene via ent-copalyldiphosphate in a two-step cyclization reaction performed by the bifunctional ent-copalyl diphosphate synthase/ent-kaurene synthase enzyme (CPS/KS). Ent-Kaurene is metabolized to GAs by a series of oxidation reactions catalyzed by cytochrome P450 monooxygenases. Cytochrome P450 monooxygenase P450-4 is an ent-kaurene oxidase that catalyzes the three oxidation steps between ent-kaurene and ent-kaurenoic acid. The highly multifunctional cytochrome P450 monooxygenase P450-1 then catalyzes four steps involving oxidation at two carbon atoms, in the main pathway from ent-kaurenoic acid to GA14 via GA12-aldehyde as well as producing kaurenolides and fujenoic acids as by-products. The cytochrome P450 monooxygenase P450-2 then converts GA14 to GA4 by removal of C-20. GA4 is further converted to GA7 by the GA4 desaturase DES via 1,2-desaturation before cytochrome P450 monooxygenase P450-3, a 13-hydroxylase, hydroxylates GA7 to GA3, the final product of the GA-biosynthetic pathway. The sequence is that of Gibberellin cluster GA4 desaturase from Gibberella fujikuroi (strain CBS 195.34 / IMI 58289 / NRRL A-6831) (Bakanae and foot rot disease fungus).